Here is a 259-residue protein sequence, read N- to C-terminus: UPF0246 protein PputGB1_4560 (259 aa).

It belongs to the UPF0246 family.

The sequence is that of UPF0246 protein PputGB1_4560 from Pseudomonas putida (strain GB-1).